The sequence spans 862 residues: Probable inorganic carbon transporter subunit DabA (862 aa).

4 residues coordinate Zn(2+): Cys365, Asp367, His540, and Cys555.

This sequence belongs to the inorganic carbon transporter (TC 9.A.2) DabA family. Forms a complex with DabB. Requires Zn(2+) as cofactor.

It localises to the cell inner membrane. In terms of biological role, part of an energy-coupled inorganic carbon pump. The protein is Probable inorganic carbon transporter subunit DabA of Vibrio cholerae serotype O1 (strain ATCC 39315 / El Tor Inaba N16961).